A 605-amino-acid chain; its full sequence is MSWGTELWDQFDSLDKHTQWGIDFLERYAKFVKERIEIEQNYAKQLRNLVKKYCPKRSSKDEEPRFTSCVAFFNILNELNDYAGQREVVAEEMAHRVYGELMRYAHDLKTERKMHLQEGRKAQQYLDMCWKQMDNSKKKFERECREAEKAQQSYERLDNDTNATKADVEKAKQQLNLRTHMADENKNEYAAQLQNFNGEQHKHFYVVIPQIYKQLQEMDERRTIKLSECYRGFADSERKVIPIISKCLEGMILAAKSVDERRDSQMVVDSFKSGFEPPGDFPFEDYSQHIYRTISDGTISASKQESGKMDAKTTVGKAKGKLWLFGKKPKPQSPPLTPTSLFTSSTPNGSQFLTFSIEPVHYCMNEIKTGKPRIPSFRSLKRGWSVKMGPALEDFSHLPPEQRRKKLQQRIDELNRELQKESDQKDALNKMKDVYEKNPQMGDPGSLQPKLAETMNNIDRLRMEIHKNEAWLSEVEGKTGGRGDRRHSSDINHLVTQGRESPEGSYTDDANQEVRGPPQQHGHHNEFDDEFEDDDPLPAIGHCKAIYPFDGHNEGTLAMKEGEVLYIIEEDKGDGWTRARRQNGEEGYVPTSYIDVTLEKNSKGS.

An F-BAR domain is found at 1–263 (MSWGTELWDQ…AAKSVDERRD (263 aa)). Residues 66-258 (FTSCVAFFNI…EGMILAAKSV (193 aa)) adopt a coiled-coil conformation. The interaction with CDC42 stretch occupies residues 245–535 (SKCLEGMILA…EFDDEFEDDD (291 aa)). The residue at position 295 (serine 295) is a Phosphoserine. The stretch at 392 to 484 (LEDFSHLPPE…VEGKTGGRGD (93 aa)) forms a coiled coil. The 78-residue stretch at 397 to 474 (HLPPEQRRKK…IHKNEAWLSE (78 aa)) folds into the REM-1 domain. Residues 476–490 (EGKTGGRGDRRHSSD) show a composition bias toward basic and acidic residues. The tract at residues 476-539 (EGKTGGRGDR…EFEDDDPLPA (64 aa)) is disordered. Phosphoserine occurs at positions 488, 501, and 505. The interaction with DNM1 stretch occupies residues 522–605 (GHHNEFDDEF…VTLEKNSKGS (84 aa)). Positions 527–536 (FDDEFEDDDP) are enriched in acidic residues. An SH3 domain is found at 538–599 (PAIGHCKAIY…PTSYIDVTLE (62 aa)). Residues 541–597 (GHCKAIYPFDGHNEGTLAMKEGEVLYIIEEDKGDGWTRARRQNGEEGYVPTSYIDVT) form an interaction with DNM2 and WASL region. The interval 541–605 (GHCKAIYPFD…VTLEKNSKGS (65 aa)) is interaction with DAAM1, DIAPH1 and DIAPH2.

This sequence belongs to the FNBP1 family. Homodimerizes, the dimers can polymerize end-to-end to form filamentous structures. Interacts with GTP-bound CDC42. Interacts with DAAM1, DIAPH1, DIAPH2, DNM1, DNM2 and WASL/N-WASP. Interacts with ATG3. Interacts (via SH3 domain) with ABI1, WASF2, CDC42 and WIPF1.

The protein resides in the cytoplasm. The protein localises to the cytoskeleton. It is found in the cell cortex. It localises to the cytoplasmic vesicle. Its subcellular location is the cell membrane. In terms of biological role, required to coordinate membrane tubulation with reorganization of the actin cytoskeleton during endocytosis. May bind to lipids such as phosphatidylinositol 4,5-bisphosphate and phosphatidylserine and promote membrane invagination and the formation of tubules. Also promotes CDC42-induced actin polymerization by activating the WASL/N-WASP-WASPIP/WIP complex, the predominant form of WASL/N-WASP in cells. Actin polymerization may promote the fission of membrane tubules to form endocytic vesicles. Essential for autophagy of intracellular bacterial pathogens. The chain is Formin-binding protein 1-like (FNBP1L) from Homo sapiens (Human).